We begin with the raw amino-acid sequence, 297 residues long: Alarmin release inhibitor (297 aa).

N-linked (GlcNAc...) asparagine glycans are attached at residues N107, N175, and N190. One can recognise a Sushi domain in the interval 151 to 211 (TYDPTPNTPT…WVPTLGVCPK (61 aa)). Residues C183 and C209 are joined by a disulfide bond.

In terms of assembly, interacts with mouse IL33 (in reduced form).

It localises to the secreted. Its subcellular location is the host nucleus. Secreted protein which suppresses the host allergic response by inhibiting the interaction of host IL33 with its receptor in order to maintain parasitic infection. Binds to both host IL33 and host nuclear DNA and this dual binding blocks the interaction of IL33 with its receptor, and tethers IL33 within necrotic cells, preventing its release, and blocking allergic response initiation. This Heligmosomoides polygyrus (Parasitic roundworm) protein is Alarmin release inhibitor.